The sequence spans 72 residues: Translation initiation factor IF-1 (72 aa).

The S1-like domain occupies 1–72 (MAKDDVIEIQ…TKGRITYRFK (72 aa)).

It belongs to the IF-1 family. As to quaternary structure, component of the 30S ribosomal translation pre-initiation complex which assembles on the 30S ribosome in the order IF-2 and IF-3, IF-1 and N-formylmethionyl-tRNA(fMet); mRNA recruitment can occur at any time during PIC assembly.

It localises to the cytoplasm. In terms of biological role, one of the essential components for the initiation of protein synthesis. Stabilizes the binding of IF-2 and IF-3 on the 30S subunit to which N-formylmethionyl-tRNA(fMet) subsequently binds. Helps modulate mRNA selection, yielding the 30S pre-initiation complex (PIC). Upon addition of the 50S ribosomal subunit IF-1, IF-2 and IF-3 are released leaving the mature 70S translation initiation complex. In Lacticaseibacillus paracasei (strain ATCC 334 / BCRC 17002 / CCUG 31169 / CIP 107868 / KCTC 3260 / NRRL B-441) (Lactobacillus paracasei), this protein is Translation initiation factor IF-1.